A 185-amino-acid polypeptide reads, in one-letter code: Elongation factor P (185 aa).

The protein belongs to the elongation factor P family.

It is found in the cytoplasm. The protein operates within protein biosynthesis; polypeptide chain elongation. Involved in peptide bond synthesis. Stimulates efficient translation and peptide-bond synthesis on native or reconstituted 70S ribosomes in vitro. Probably functions indirectly by altering the affinity of the ribosome for aminoacyl-tRNA, thus increasing their reactivity as acceptors for peptidyl transferase. This chain is Elongation factor P, found in Aromatoleum aromaticum (strain DSM 19018 / LMG 30748 / EbN1) (Azoarcus sp. (strain EbN1)).